The primary structure comprises 423 residues: Enolase (423 aa).

Gln-166 contacts (2R)-2-phosphoglycerate. The Proton donor role is filled by Glu-208. The Mg(2+) site is built by Asp-242, Glu-283, and Asp-310. Residues Lys-335, Arg-364, Ser-365, and Lys-386 each contribute to the (2R)-2-phosphoglycerate site. The Proton acceptor role is filled by Lys-335.

Belongs to the enolase family. It depends on Mg(2+) as a cofactor.

It localises to the cytoplasm. The protein localises to the secreted. It is found in the cell surface. It carries out the reaction (2R)-2-phosphoglycerate = phosphoenolpyruvate + H2O. It participates in carbohydrate degradation; glycolysis; pyruvate from D-glyceraldehyde 3-phosphate: step 4/5. Functionally, catalyzes the reversible conversion of 2-phosphoglycerate (2-PG) into phosphoenolpyruvate (PEP). It is essential for the degradation of carbohydrates via glycolysis. The protein is Enolase of Elusimicrobium minutum (strain Pei191).